A 120-amino-acid polypeptide reads, in one-letter code: NAD(P)H-quinone oxidoreductase subunit 3, chloroplastic (120 aa).

3 helical membrane-spanning segments follow: residues 9-29, 64-84, and 88-108; these read IFWA…LISG, MFAL…PWAM, and VLGV…ILGL.

Belongs to the complex I subunit 3 family. In terms of assembly, NDH is composed of at least 16 different subunits, 5 of which are encoded in the nucleus.

It localises to the plastid. The protein resides in the chloroplast thylakoid membrane. The enzyme catalyses a plastoquinone + NADH + (n+1) H(+)(in) = a plastoquinol + NAD(+) + n H(+)(out). It catalyses the reaction a plastoquinone + NADPH + (n+1) H(+)(in) = a plastoquinol + NADP(+) + n H(+)(out). Functionally, NDH shuttles electrons from NAD(P)H:plastoquinone, via FMN and iron-sulfur (Fe-S) centers, to quinones in the photosynthetic chain and possibly in a chloroplast respiratory chain. The immediate electron acceptor for the enzyme in this species is believed to be plastoquinone. Couples the redox reaction to proton translocation, and thus conserves the redox energy in a proton gradient. The sequence is that of NAD(P)H-quinone oxidoreductase subunit 3, chloroplastic from Draba nemorosa (Woodland whitlowgrass).